The following is a 292-amino-acid chain: MNNHFKCIGIVGHPRHPTALTTHEMLYRWLCTKGYEVIVEQQIAHELQLKNVKTGTLAEIGQQADLAVVVGGDGNMLGAARTLARYDIKVIGINRGNLGFLTDLDPDNAQQQLADVLEGHYISEKRFLLEAQVCQQDCQKRISTAINEVVLHPGKVAHMIEFEVYIDEIFAFSQRSDGLIISTPTGSTAYSLSAGGPILTPSLDAITLVPMFPHTLSARPLVINSSSTIRLRFSHRRNDLEISCDSQIALPIQEGEDVLIRRCDYHLNLIHPKDYSYFNTLSTKLGWSKKLF.

The Proton acceptor role is filled by Asp-73. Residues 73 to 74, 147 to 148, His-158, Arg-175, Asp-177, 188 to 193, and Gln-247 each bind NAD(+); these read DG, NE, and TAYSLS.

This sequence belongs to the NAD kinase family. It depends on a divalent metal cation as a cofactor.

The protein localises to the cytoplasm. It carries out the reaction NAD(+) + ATP = ADP + NADP(+) + H(+). Functionally, involved in the regulation of the intracellular balance of NAD and NADP, and is a key enzyme in the biosynthesis of NADP. Catalyzes specifically the phosphorylation on 2'-hydroxyl of the adenosine moiety of NAD to yield NADP. The protein is NAD kinase of Escherichia coli (strain UTI89 / UPEC).